A 1277-amino-acid polypeptide reads, in one-letter code: MSKSLKKKSHWTSKVHESVIGRNPEGQLGFELKGGAENGQFPYLGEVKPGKVAYESGSKLVSEELLLEVNETPVAGLTIRDVLAVIKHCKDPLRLKCVKQGGIVDKDLRHYLNLRFQKGSVDHELQQIIRDNLYLRTVPCTTRPHKEGEVPGVDYIFITVEDFMELEKSGALLESGTYEDNYYGTPKPPAEPAPLLLNVTDQILPGATPSAEGKRKRNKSVTNMEKASIEPPEEEEEERPVVNGNGVVITPESSEHEDKSAGASGETPSQPYPAPVYSQPEELKDQMDDTKSTKPEENEDSDPLPDNWEMAYTEKGEVYFIDHNTKTTSWLDPRLAKKAKPAEECKENELPYGWEKIDDPIYGTYYVDHINRRTQFENPVLEAKRKLQQHNMPHTELGTKPLQAPGFREKPLFTRDASQLKGTFLSTTLKKSNMGFGFTIIGGDEPDEFLQVKSVIPDGPAAQDGKMETGDVIVYINEVCVLGHTHADVVKLFQSVPIGQSVNLVLCRGYPLPFDPEDPANSMVPPLAIMERPPPVMVNGRHNYETYLEYISRTSQSVPDITDRPPHSLHSMPADGQLDGTYPPPVHDDNVSVASSGATQAELMTLTIVKGAKGFGFTIADSPTGQRVKQILDIQGCPGLCEGDLIVEINQQNVQNLSHTEVVDILKDCPVGSETSLIIHRGGFFSPWKTPKPMVDRWENQGSPQTSLSAPAVPQSLPFPPALHRSSFPDSTEAFDPRKPDPYELYEKSRAIYESRQQVPPRTSFRMDSSGPDYKELDVHLRRMESGFGFRILGGDEPGQPILIGAVIAMGSADRDGRLHPGDELVYVDGIPVAGKTHRYVIDLMHHAARNGQVNLTVRRKVLCGGEPCPENGRSPGSVSTHHSSPRSDYATYANSNHAAPSNNASPPEGFASHSLQTSDVIIHRKENEGFGFVIISSLNRPESGATITVPHKIGRIIDGSPADRCAKLKVGDRILAVNGQSIINMPHADIVKLIKDAGLSVTLRIIPQEELNNPTSAPSSEKQSPMAQQHSPLAQQHSPLAQPSPATPNSPVAQPAPPQPLQLQGHENSYRSEVKARQDVKPDIRQPPFTDYRQPPLDYRQPPGGDYSQPSPLDYRQHSPDTRQYPLSDYRQPQDFDYFTVDMEKGAKGFGFSIRGGREYKMDLYVLRLAEDGPAIRNGRMRVGDQIIEINGESTRDMTHARAIELIKSGGRRVRLLLKRGTGQVPEYGMVPSSLSMCMKSDKHGSPYFYLLGHPKDTTNPTPGALPLPPPQACRK.

Residues 17-101 (ESVIGRNPEG…PLRLKCVKQG (85 aa)) form the PDZ domain. Positions 109–283 (RHYLNLRFQK…APVYSQPEEL (175 aa)) constitute a Guanylate kinase-like domain. A disordered region spans residues 205–308 (PGATPSAEGK…EDSDPLPDNW (104 aa)). The span at 281–296 (EELKDQMDDTKSTKPE) shows a compositional bias: basic and acidic residues. WW domains are found at residues 302–335 (DPLP…DPRL) and 348–381 (NELP…NPVL). The segment at 302–381 (DPLPDNWEMA…RRTQFENPVL (80 aa)) is interaction with DDN. Tyr362 carries the post-translational modification Phosphotyrosine. Residues 426–510 (STTLKKSNMG…SVNLVLCRGY (85 aa)) form the PDZ 1 domain. Positions 556-575 (QSVPDITDRPPHSLHSMPAD) are disordered. The 79-residue stretch at 605 to 683 (TLTIVKGAKG…ETSLIIHRGG (79 aa)) folds into the PDZ 2 domain. Ser686 is subject to Phosphoserine. The PDZ 3 domain occupies 778-860 (DVHLRRMESG…NGQVNLTVRR (83 aa)). At Tyr827 the chain carries Phosphotyrosine. The tract at residues 869-913 (CPENGRSPGSVSTHHSSPRSDYATYANSNHAAPSNNASPPEGFAS) is disordered. Ser884 and Ser885 each carry phosphoserine. A compositionally biased stretch (low complexity) spans 894 to 908 (ANSNHAAPSNNASPP). One can recognise a PDZ 4 domain in the interval 920 to 1010 (DVIIHRKENE…SVTLRIIPQE (91 aa)). Positions 1011 to 1042 (ELNNPTSAPSSEKQSPMAQQHSPLAQQHSPLA) are enriched in polar residues. Residues 1011–1130 (ELNNPTSAPS…PDTRQYPLSD (120 aa)) are disordered. Over residues 1069–1085 (NSYRSEVKARQDVKPDI) the composition is skewed to basic and acidic residues. The PDZ 5 domain maps to 1141–1223 (TVDMEKGAKG…RVRLLLKRGT (83 aa)).

Belongs to the MAGUK family. In terms of assembly, interacts (via its WW domains) with DRPLA. Interacts with CTNNB1, ACVR2A, SMAD2 and SMAD3. Part of a complex consisting of MAGI2/ARIP1, ACVR2A, ACVR1B and SMAD3. May interact with HTR2A and IGSF9. Interacts with HTR4. Interacts (via guanylate kinase domain) with DLGAP1. Interacts (via PDZ domains) with GRIN2A, GRID2 and NLGN1. Interacts with CTNND2. Interacts with MAGUIN-1. Interacts (via its second PDZ domain) with PTEN (via unphosphorylated C-terminus); this interaction diminishes the degradation rate of PTEN. Found in a complex, at least composed of KIDINS220, MAGI2, NTRK1 and RAPGEF2; the complex is mainly formed at late endosomes in a NGF-dependent manner. Interacts with RAPGEF2; the interaction occurs before or after nerve growth factor (NGF) stimulation. Isoform 1 interacts (via PDZ domain) with KIDINS220 isoform 2 (via C-terminal domain). Interacts with DDN. Identified in a complex with ACTN4, CASK, IQGAP1, NPHS1, SPTAN1 and SPTBN1. Interacts with DLL1. Found in a complex with IGSF9B and NLGN2; the interaction with IGSF9B is mediated via the PDZ 5 and PDZ 6 domains, while the interaction with NLGN2 is mediated via the WW1, WW2 and PDZ2 domains. Interacts (via PDZ 6 domain) with USH1G (via SAM domain); the interaction is triggered by phosphorylation of USH1G by CK2 and negatively regulates MAGI2-mediated endocytosis. As to expression, expressed in the foot process layer of podocytes of the kidney glomeruli but not in tubules (at protein level). Expressed in the brain.

Its subcellular location is the cytoplasm. It localises to the late endosome. It is found in the synapse. The protein localises to the synaptosome. The protein resides in the cell membrane. Its subcellular location is the cytoskeleton. It localises to the microtubule organizing center. It is found in the centrosome. The protein localises to the cell projection. The protein resides in the cilium. Its subcellular location is the centriole. It localises to the photoreceptor inner segment. It is found in the photoreceptor outer segment. Functionally, seems to act as scaffold molecule at synaptic junctions by assembling neurotransmitter receptors and cell adhesion proteins. Plays a role in nerve growth factor (NGF)-induced recruitment of RAPGEF2 to late endosomes and neurite outgrowth. May play a role in regulating activin-mediated signaling in neuronal cells. Enhances the ability of PTEN to suppress AKT1 activation. Plays a role in receptor-mediated clathrin-dependent endocytosis which is required for ciliogenesis. This is Membrane-associated guanylate kinase, WW and PDZ domain-containing protein 2 (Magi2) from Rattus norvegicus (Rat).